The primary structure comprises 382 residues: Galactokinase (382 aa).

34-37 (EHTD) contacts substrate. Position 124-130 (124-130 (GAGLSSS)) interacts with ATP. Residues serine 130 and glutamate 162 each contribute to the Mg(2+) site. Aspartate 174 serves as the catalytic Proton acceptor. Tyrosine 223 lines the substrate pocket.

This sequence belongs to the GHMP kinase family. GalK subfamily.

Its subcellular location is the cytoplasm. It carries out the reaction alpha-D-galactose + ATP = alpha-D-galactose 1-phosphate + ADP + H(+). It functions in the pathway carbohydrate metabolism; galactose metabolism. Functionally, catalyzes the transfer of the gamma-phosphate of ATP to D-galactose to form alpha-D-galactose-1-phosphate (Gal-1-P). The polypeptide is Galactokinase (Shigella flexneri).